The primary structure comprises 325 residues: 5-dehydro-2-deoxygluconokinase (325 aa).

This sequence belongs to the carbohydrate kinase PfkB family.

The catalysed reaction is 5-dehydro-2-deoxy-D-gluconate + ATP = 6-phospho-5-dehydro-2-deoxy-D-gluconate + ADP + H(+). It functions in the pathway polyol metabolism; myo-inositol degradation into acetyl-CoA; acetyl-CoA from myo-inositol: step 5/7. Its function is as follows. Catalyzes the phosphorylation of 5-dehydro-2-deoxy-D-gluconate (2-deoxy-5-keto-D-gluconate or DKG) to 6-phospho-5-dehydro-2-deoxy-D-gluconate (DKGP). This Listeria monocytogenes serovar 1/2a (strain ATCC BAA-679 / EGD-e) protein is 5-dehydro-2-deoxygluconokinase.